The following is a 396-amino-acid chain: Probable sugar efflux transporter (396 aa).

The next 12 helical transmembrane spans lie at 15 to 35, 50 to 70, 81 to 101, 103 to 123, 136 to 156, 170 to 190, 209 to 229, 246 to 266, 275 to 295, 299 to 319, 333 to 353, and 364 to 384; these read VVTL…PVGL, VGIM…PFML, LICL…SWSF, VLVI…SITA, AQAL…GLPL, FFAI…LLPL, PALM…YTAY, FATA…VIFG, ALVS…LPAA, IHLG…GLGM, VAMA…ALVG, and MIGY…IIIF.

It belongs to the major facilitator superfamily. SotB (TC 2.A.1.2) family.

The protein resides in the cell inner membrane. Its function is as follows. Involved in the efflux of sugars. The physiological role may be the reduction of the intracellular concentration of toxic sugars or sugar metabolites. The polypeptide is Probable sugar efflux transporter (Escherichia coli O6:K15:H31 (strain 536 / UPEC)).